Here is a 414-residue protein sequence, read N- to C-terminus: MRILMVSWEYPPVVIGGLGRHVHHLSTALAAAGHDVVVLSRCPSGTDPSTHPSSDEVTEGVRVIAAAQDPHEFTFGNDMMAWTLAMGHAMIRAGLRLKKLGTDRSWRPDVVHAHDWLVAHPAIALAQFYDVPMVSTIHATEAGRHSGWVSGALSRQVHAVESWLVRESDSLITCSASMNDEITELFGPGLAEITVIRNGIDAARWPFAARRPRTGPAELLYVGRLEYEKGVHDAIAALPRLRRTHPGTTLTIAGEGTQQDWLIDQARKHRVLRATRFVGHLDHTELLALLHRADAAVLPSHYEPFGLVALEAAAAGTPLVTSNIGGLGEAVINGQTGVSCAPRDVAGLAAAVRSVLDDPAAAQRRARAARQRLTSDFDWQTVATATAQVYLAAKRGERQPQPRLPIVEHALPDR.

It belongs to the glycosyltransferase group 1 family.

The catalysed reaction is [(1-&gt;4)-alpha-D-glucosyl](n) + UDP-alpha-D-glucose = [(1-&gt;4)-alpha-D-glucosyl](n+1) + UDP + H(+). It functions in the pathway glycan biosynthesis; glycogen biosynthesis. Glucosyltransferase that uses UDP-glucose as the sugar donor to elongate alpha-(1-&gt;4)-glucans. Is involved in the biosynthesis of both 6-O-methylglucosyl lipopolysaccharides (MGLP) and glycogen. May also use ADP-glucose as substrate. The protein is Glycogen synthase of Mycobacterium tuberculosis (strain CDC 1551 / Oshkosh).